Consider the following 31-residue polypeptide: Cytochrome b6-f complex subunit 6 (31 aa).

A helical transmembrane segment spans residues 4 to 24 (VISYFGFLLVALAFTLVTYLG).

Belongs to the PetL family. In terms of assembly, the 4 large subunits of the cytochrome b6-f complex are cytochrome b6, subunit IV (17 kDa polypeptide, PetD), cytochrome f and the Rieske protein, while the 4 small subunits are PetG, PetL, PetM and PetN. The complex functions as a dimer.

The protein localises to the plastid. It localises to the chloroplast thylakoid membrane. Its function is as follows. Component of the cytochrome b6-f complex, which mediates electron transfer between photosystem II (PSII) and photosystem I (PSI), cyclic electron flow around PSI, and state transitions. PetL is important for photoautotrophic growth as well as for electron transfer efficiency and stability of the cytochrome b6-f complex. In Nephroselmis olivacea (Green alga), this protein is Cytochrome b6-f complex subunit 6.